The following is a 671-amino-acid chain: DNA ligase (671 aa).

NAD(+) contacts are provided by residues 32-36, 81-82, and E113; these read DAEYD and SL. K115 serves as the catalytic N6-AMP-lysine intermediate. Residues R136, E173, K290, and K314 each contribute to the NAD(+) site. The Zn(2+) site is built by C408, C411, C426, and C432. Residues 593-671 enclose the BRCT domain; it reads EIDSPFAGKT…EAEMLRLLGS (79 aa).

It belongs to the NAD-dependent DNA ligase family. LigA subfamily. The cofactor is Mg(2+). Requires Mn(2+) as cofactor.

The enzyme catalyses NAD(+) + (deoxyribonucleotide)n-3'-hydroxyl + 5'-phospho-(deoxyribonucleotide)m = (deoxyribonucleotide)n+m + AMP + beta-nicotinamide D-nucleotide.. DNA ligase that catalyzes the formation of phosphodiester linkages between 5'-phosphoryl and 3'-hydroxyl groups in double-stranded DNA using NAD as a coenzyme and as the energy source for the reaction. It is essential for DNA replication and repair of damaged DNA. The chain is DNA ligase from Escherichia coli (strain ATCC 8739 / DSM 1576 / NBRC 3972 / NCIMB 8545 / WDCM 00012 / Crooks).